We begin with the raw amino-acid sequence, 268 residues long: Glutamine amidotransferase-like class 1 domain-containing protein 3, mitochondrial (268 aa).

A mitochondrion-targeting transit peptide spans 1 to 41 (MAAVRVLVASRLAAASAFTSLSPGGRTPSQRAALHLSVPRP). N6-acetyllysine occurs at positions 151, 157, and 164. An N6-acetyllysine; alternate modification is found at K203. K203 carries the post-translational modification N6-succinyllysine; alternate. K219 carries the post-translational modification N6-acetyllysine. 2 positions are modified to N6-acetyllysine; alternate: K223 and K233. N6-succinyllysine; alternate occurs at positions 223 and 233.

Belongs to the GATD3 family.

It is found in the mitochondrion. This is Glutamine amidotransferase-like class 1 domain-containing protein 3, mitochondrial from Homo sapiens (Human).